The chain runs to 370 residues: Flagellar P-ring protein (370 aa).

A signal peptide spans 1–21 (MKYILIKLSIVMIFIINSASK).

This sequence belongs to the FlgI family. As to quaternary structure, the basal body constitutes a major portion of the flagellar organelle and consists of four rings (L,P,S, and M) mounted on a central rod.

It localises to the bacterial flagellum basal body. In terms of biological role, assembles around the rod to form the L-ring and probably protects the motor/basal body from shearing forces during rotation. The protein is Flagellar P-ring protein of Wigglesworthia glossinidia brevipalpis.